The following is a 535-amino-acid chain: Flavin-containing monooxygenase 2 (535 aa).

Alanine 2 carries the post-translational modification N-acetylalanine. FAD contacts are provided by residues 9 to 13 (GAGVS), glutamate 32, 40 to 41 (VW), and 61 to 62 (NT). Residues 60 to 61 (TN) and 195 to 198 (SGSD) contribute to the NADP(+) site. Residue lysine 492 forms a Glycyl lysine isopeptide (Lys-Gly) (interchain with G-Cter in SUMO) linkage. Residues 510-530 (FSVSFLLKILGLLAVVVAFFC) form a helical membrane-spanning segment.

It belongs to the FMO family. Requires FAD as cofactor. It depends on Mg(2+) as a cofactor. As to expression, expressed in lung (at protein level). Expressed predominantly in lung, and at a much lesser extent in kidney. Also expressed in fetal lung, but not in liver, kidney and brain.

The protein localises to the microsome membrane. Its subcellular location is the endoplasmic reticulum membrane. In terms of biological role, catalyzes the oxidative metabolism of numerous xenobiotics, including mainly therapeutic drugs and insecticides that contain a soft nucleophile, most commonly nitrogen and sulfur and participates to their bioactivation. Specifically catalyzes S-oxygenation of sulfur derived compounds such as thioureas-derived compounds, thioetherorganophosphates to their sulfenic acid. In vitro, catalyzes S-oxygenation of the second-line antitubercular drugs thiacetazone (TAZ) and ethionamide (ETA), forming a sulfinic acid and a carbodiimide via a postulated sulfenic acid intermediate. Also catalyzes S-oxygenation of the thioether-containing organophosphate insecticides, phorate and disulfoton. The protein is Flavin-containing monooxygenase 2 of Homo sapiens (Human).